Reading from the N-terminus, the 366-residue chain is MKKSSSLALGNFFKTKKQILKADIQKLIKTNQINYVDPKHGTALNRAIKLKDEKIITELLAKKVDINEAIYFAIGHEYTLEEIKTLISLSSSELPDEYLYKAVHQGRLDLVQYFIEEKNFDVNTTINNPLHGGAILSIATMGEHIDVINYLLKNGAIASQGVISAILKGNIEILEKLFEYGATAHDGYSEDLVALLVNAAIPANDPTYCKSSNSETKEDLSNYVETLKFLLEHGGNPNAEFLERGTVILIALSALMDEPKNDTYKDICKLLIQYGADTSKFKSYTETINNLKKEIIEDMKVVDKSDFKDEGYVSDSAEADQLSKKGSKLVDTSSKSVFFSLEEIIEKNPTTLGGETDIVKSEFFNS.

ANK repeat units lie at residues Lys39 to Glu68, Leu94 to Thr124, His131 to Gln160, Val162 to Asp186, Lys210 to Ala239, and Ile250 to Lys280.

This is Putative ankyrin repeat protein RBE_0601 from Rickettsia bellii (strain RML369-C).